The sequence spans 81 residues: MKNVSQVSVAVLLIFSILVLGIGVQGKVPCLSRMFNKNNTCSFLRCEANCARKYKGYGDCRPGDRPHDKKDSLFCFCNYPC.

The first 26 residues, 1–26 (MKNVSQVSVAVLLIFSILVLGIGVQG), serve as a signal peptide directing secretion. Intrachain disulfides connect Cys-30–Cys-81, Cys-41–Cys-60, Cys-46–Cys-75, and Cys-50–Cys-77.

It belongs to the DEFL family.

It is found in the secreted. The protein is Defensin-like protein 153 (LCR31) of Arabidopsis thaliana (Mouse-ear cress).